Here is a 227-residue protein sequence, read N- to C-terminus: Ureidoacrylate amidohydrolase RutB (227 aa).

The active-site Proton acceptor is the Asp22. Lys131 is an active-site residue. Cys164 acts as the Nucleophile in catalysis.

The protein belongs to the isochorismatase family. RutB subfamily.

It catalyses the reaction (Z)-3-ureidoacrylate + H2O + H(+) = (Z)-3-aminoacrylate + NH4(+) + CO2. The enzyme catalyses (Z)-3-ureidoacrylate + H2O = (Z)-3-aminoacrylate + carbamate + H(+). It carries out the reaction (Z)-2-methylureidoacrylate + H2O + H(+) = (Z)-2-methylaminoacrylate + NH4(+) + CO2. In terms of biological role, hydrolyzes ureidoacrylate to form aminoacrylate and carbamate. The carbamate hydrolyzes spontaneously, thereby releasing one of the nitrogen atoms of the pyrimidine ring as ammonia and one of its carbon atoms as CO2. The chain is Ureidoacrylate amidohydrolase RutB from Azorhizobium caulinodans (strain ATCC 43989 / DSM 5975 / JCM 20966 / LMG 6465 / NBRC 14845 / NCIMB 13405 / ORS 571).